Reading from the N-terminus, the 637-residue chain is MAKIIKLDDHLSNKIAAGEVVERPASVVKELVENALDANSRKITIEVEAGGLDRIRVIDDGDGIEREDVETAFFRHATSKIKTDKDLFQIATLGFRGEALPSIASVSHVQIKTSTGGDGGTEMVLEGGVIKKIGSTAMGKGTDLTVTQLFYNTPARLKYVKTVHTELGNISDVVNRLALAHPYVSFQLFHNGKNVLRTSGNGDQLQVIAAIYGRTVAKQMVPLSGETIDFTVSGFAAKPEVTRASRQYMSLLVNGRYIRNVALSKAIQQGFHTLLPIGRYPIAIVNIELDPQLIDVNVHPSKLEVRVSKEEELCRLVTETIERAFKKEQLIPEATKPTGGKQKSEQLSFTLDDFTSAKPSEDRGSTSSNEENEQRSSIDKNVLFQEERKLSNDLPSINMVREASASVEPALEKEPPAAELTAGAKGAMEQASMEEETSNSLPANRVPTMYPIGQMHGTYILAQNDQGLYIIDQHAAQERMKYEYFREKVGEVTNELQELIVPITVECTLQEAAYIEEHLEDLKQVGLFFEEFGPQTFMIRQHPTWFPKGLEEETIREMIDQLMEKRKVDIKKLREEVAILMSCKAAIKANRHLRHDEMYALLEALRKSSDPFTCPHGRPIIVQITTYEMEKMFKRVM.

2 disordered regions span residues 352–384 and 405–430; these read DDFT…NVLF and ASVE…AMEQ.

Belongs to the DNA mismatch repair MutL/HexB family.

In terms of biological role, this protein is involved in the repair of mismatches in DNA. It is required for dam-dependent methyl-directed DNA mismatch repair. May act as a 'molecular matchmaker', a protein that promotes the formation of a stable complex between two or more DNA-binding proteins in an ATP-dependent manner without itself being part of a final effector complex. The polypeptide is DNA mismatch repair protein MutL (Halalkalibacterium halodurans (strain ATCC BAA-125 / DSM 18197 / FERM 7344 / JCM 9153 / C-125) (Bacillus halodurans)).